A 190-amino-acid chain; its full sequence is Female-specific histamine-binding protein 1 (190 aa).

An N-terminal signal peptide occupies residues 1–18; sequence MKLLLSLAFVLALSQVKA. Residues tyrosine 54, aspartate 57, tryptophan 60, glutamate 100, tyrosine 118, glutamate 153, and tryptophan 155 each coordinate histamine. Disulfide bonds link cysteine 66–cysteine 187 and cysteine 137–cysteine 166.

The protein belongs to the calycin superfamily. Histamine-binding salivary protein family. As to quaternary structure, monomer. As to expression, expressed in salivary glands.

It is found in the secreted. In terms of biological role, salivary tick protein that acts by scavenging histamine at the wound site, outcompeting histamine receptors for histamine, thereby overcoming host inflammatory responses. Binds histamine with a high-affinity (Kd=18 nM). Contains two binding histamine sites (H and L), that appear to bind histamine with differing affinities (high and low). In vivo, when tested on a mouse asthma model, shows a profound inhibitory effect on allergic asthma. Aerosol administration of this protein prevents airway hyperreactivity and abrogates peribronchial inflammation, eosinophil recruitment, mucus hypersecretion, and interleukins (IL-4 and IL-5) secretion. In addition, when tested on a mouse model of acute respiratory distress syndrome (ARDS), it attenuates endotoxin-induced acute lung injury. The protein is Female-specific histamine-binding protein 1 of Rhipicephalus appendiculatus (Brown ear tick).